Here is a 399-residue protein sequence, read N- to C-terminus: RNA-binding protein cabeza (399 aa).

Residues Met1 to Gln12 show a composition bias toward gly residues. The disordered stretch occupies residues Met1–Gly82. Over residues Tyr24–Tyr34 the composition is skewed to polar residues. Residues Lys43–Ser69 are compositionally biased toward gly residues. The RRM domain maps to Asp120 to Arg206. Disordered regions lie at residues Asn209 to Asp276 and Thr300 to Tyr399. Residues Lys212–Asn271 are compositionally biased toward gly residues. The RanBP2-type zinc-finger motif lies at Arg275 to Asp304. Composition is skewed to gly residues over residues Ser308–Tyr339, Asn347–Tyr361, and Asn368–Gly380. The span at Pro387 to Tyr399 shows a compositional bias: low complexity.

It belongs to the RRM TET family. Ubiquitous. Enriched in the brain and central nervous system during embryogenesis. Enriched in the adult head. Embryos contain both isoforms A and B, whereas later in development (heads and torsos) only isoform B is detected.

The protein localises to the nucleus. In terms of biological role, may participate in a function common to the expression of most genes transcribed by RNA polymerase II. The polypeptide is RNA-binding protein cabeza (caz) (Drosophila melanogaster (Fruit fly)).